The following is a 131-amino-acid chain: UPF0212 protein TK1194 (131 aa).

It belongs to the UPF0212 family.

The chain is UPF0212 protein TK1194 from Thermococcus kodakarensis (strain ATCC BAA-918 / JCM 12380 / KOD1) (Pyrococcus kodakaraensis (strain KOD1)).